Reading from the N-terminus, the 144-residue chain is Bradykinin-potentiating and C-type natriuretic peptides isoform 2 (144 aa).

The first 23 residues, 1–23, serve as a signal peptide directing secretion; sequence MVLSRLAASGLLLLALLALSVDG. Residues 24 to 30 constitute a propeptide that is removed on maturation; sequence KPVQQWA. Glutamine 31 is subject to Pyrrolidone carboxylic acid. The propeptide occupies 41–47; the sequence is LLVQQWA. At glutamine 48 the chain carries Pyrrolidone carboxylic acid. A propeptide spanning residues 61–67 is cleaved from the precursor; the sequence is LTVQQWA. At glutamine 68 the chain carries Pyrrolidone carboxylic acid. Residues 78 to 84 constitute a propeptide that is removed on maturation; it reads LTVQQWA. Residues 81 to 110 form a disordered region; the sequence is QQWAQGRPPGPPIPPLTVQQWAQARPPHPP. Residue glutamine 85 is modified to Pyrrolidone carboxylic acid. Residues 96 to 102 constitute a propeptide that is removed on maturation; it reads LTVQQWA. Glutamine 103 is modified (pyrrolidone carboxylic acid). A propeptide spanning residues 114–116 is cleaved from the precursor; sequence APL. Glutamine 117 carries the pyrrolidone carboxylic acid modification. A propeptide is located at residue valine 122. At glutamine 123 the chain carries Pyrrolidone carboxylic acid. A propeptide spanning residues 128-144 is cleaved from the precursor; sequence VQKWAPVQKWAPLLQPT.

The protein in the N-terminal section; belongs to the bradykinin-potentiating peptide family. As to expression, expressed by venom gland.

It is found in the secreted. It localises to the cytoplasm. The protein resides in the cytosol. Its function is as follows. Peptide with several activities. It inhibits the activity of the angiotensin-converting enzyme (ACE) by a preferential interaction with its C-domain. It evokes transient hypotension (-14 mmHg) similar to that evoked by 0.5 ug of bradykinin, when injected alone into rats. It has a high bradykinin-potentiating effect (120%), when 60 nmol of BPP-10c are coinjected with 0.5 ug of bradykinin into rats. Does not affect angiotensin-1 pressor effects. Shows potent and long-lasting antihypertensive activity as well as a reduction of the heart rate. It also binds and dose-dependently promotes the activation of cytosolic argininosuccinate synthase (ASS1), an enzyme that catalyzes the conversion of citrulline, L-aspartate and ATP to argininosuccinate, AMP and pyrophosphate. It also enhances ASS1-dependent arginine production in HEK 293 cells, as well as in spontaneous hypertensive rat (SHR) and Wistar rat plasma. In addition, it induces the production of nitric-oxide (NO) by HUVEC cells via the endothelial nitric-oxide synthase (NOS3), which use arginine as a substrate and produce NO. It has been shown to be internalized by ASS1-expressing endothelial (HUVEC) and kidney (HEK 293) cells, and is detected homogenously distributed within the cell cytoplasm for up to 2 hours. Acts as indirect hypotensive agent. Increases leukocyte rolling flux and adhesion by five-fold in post-capillary venules, without any increments in vasodilation of arterioles. In terms of biological role, acts as indirect hypotensive agent. Potently induces vasodilation of arterioles, with only a small increase in leukocyte rolling flux. This chain is Bradykinin-potentiating and C-type natriuretic peptides isoform 2, found in Bothrops jararacussu (Jararacussu).